The chain runs to 503 residues: Putative (R)-citramalate synthase CimA (503 aa).

One can recognise a Pyruvate carboxyltransferase domain in the interval 9–257 (IRFFDTTLRD…DTGIATEELY (249 aa)).

This sequence belongs to the alpha-IPM synthase/homocitrate synthase family. In terms of assembly, homodimer.

The catalysed reaction is pyruvate + acetyl-CoA + H2O = (3R)-citramalate + CoA + H(+). It functions in the pathway amino-acid biosynthesis; L-isoleucine biosynthesis; 2-oxobutanoate from pyruvate: step 1/3. Functionally, catalyzes the condensation of pyruvate and acetyl-coenzyme A to form (R)-citramalate. In Methanoculleus marisnigri (strain ATCC 35101 / DSM 1498 / JR1), this protein is Putative (R)-citramalate synthase CimA.